The chain runs to 92 residues: DNA-directed RNA polymerase subunit omega (92 aa).

The protein belongs to the RNA polymerase subunit omega family. The RNAP catalytic core consists of 2 alpha, 1 beta, 1 beta' and 1 omega subunit. When a sigma factor is associated with the core the holoenzyme is formed, which can initiate transcription.

The catalysed reaction is RNA(n) + a ribonucleoside 5'-triphosphate = RNA(n+1) + diphosphate. In terms of biological role, promotes RNA polymerase assembly. Latches the N- and C-terminal regions of the beta' subunit thereby facilitating its interaction with the beta and alpha subunits. In Shewanella frigidimarina (strain NCIMB 400), this protein is DNA-directed RNA polymerase subunit omega.